The following is a 538-amino-acid chain: MADPQATNGTGAACAERDASDVGDVSDVGDARDEGAGRVVAVRGAVVDVAFDGGALPALNEALTIPVDGASPILAEVHAHLSDAAVRALALGPTGGLRRGAAVRATGGPIRVPVGDAVLGRLLSVTGAPGDDGAALAADVERRPIHRGAPPLAEQKSANALFATGIKVIDLLAPLAQGGKAAMFGGAGVGKTVLVMELIHAMVERYRGISVFAGIGERSREGHEMLLDMRGSGVLGRTVLVYGQMNEPPGARWRVPLTALAIAEYFRDERAQNVLLLMDNVFRFVQAGAEVSGLLGRLPSRVGYQPTLASEVAALQERIASVEGAAVTAIEAVYVPADDFTDPAVTAIAAHVDSMVVLSRAMAAEGMYPAIDPVASSSILLDPLVVGEAHVEVAIEVRRVIEHYRELQDVIALLGIDELGADDRRLVGRARRLQRFLTQPFAVTEAFTGQAGASVEIADTIAGCRAILRGDCDDWRESSLYMVGTLDDARRKEAAAREADARREAAAAASVAGPGTTSGTTSDPASGSAEPQGARHGR.

Over residues 1–10 (MADPQATNGT) the composition is skewed to polar residues. Positions 1-30 (MADPQATNGTGAACAERDASDVGDVSDVGD) are disordered. 185-192 (GGAGVGKT) is an ATP binding site. A compositionally biased stretch (basic and acidic residues) spans 494–505 (AAAREADARREA). The segment at 494-538 (AAAREADARREAAAAASVAGPGTTSGTTSDPASGSAEPQGARHGR) is disordered. The span at 506-529 (AAAASVAGPGTTSGTTSDPASGSA) shows a compositional bias: low complexity.

The protein belongs to the ATPase alpha/beta chains family. As to quaternary structure, F-type ATPases have 2 components, CF(1) - the catalytic core - and CF(0) - the membrane proton channel. CF(1) has five subunits: alpha(3), beta(3), gamma(1), delta(1), epsilon(1). CF(0) has three main subunits: a(1), b(2) and c(9-12). The alpha and beta chains form an alternating ring which encloses part of the gamma chain. CF(1) is attached to CF(0) by a central stalk formed by the gamma and epsilon chains, while a peripheral stalk is formed by the delta and b chains.

It is found in the cell inner membrane. It carries out the reaction ATP + H2O + 4 H(+)(in) = ADP + phosphate + 5 H(+)(out). In terms of biological role, produces ATP from ADP in the presence of a proton gradient across the membrane. The catalytic sites are hosted primarily by the beta subunits. The protein is ATP synthase subunit beta 2 of Burkholderia pseudomallei (strain K96243).